A 279-amino-acid chain; its full sequence is DegV domain-containing protein SACOL1460 (279 aa).

A DegV domain is found at 4–278 (QIIVTDSTSD…QGAIGLVVLK (275 aa)). Hexadecanoate is bound by residues T61 and S93.

In terms of biological role, may bind long-chain fatty acids, such as palmitate, and may play a role in lipid transport or fatty acid metabolism. This chain is DegV domain-containing protein SACOL1460, found in Staphylococcus aureus (strain COL).